A 121-amino-acid polypeptide reads, in one-letter code: Neuromedin-B (121 aa).

The N-terminal stretch at 1–24 (MTRQAGSSWLLRGLLLFALFASGV) is a signal peptide. Methionine amide is present on M56. Residues 60 to 121 (SLEPPSLSLV…RRLLEPLLQK (62 aa)) constitute a propeptide that is removed on maturation.

It belongs to the bombesin/neuromedin-B/ranatensin family. In terms of tissue distribution, in the hindbrain, expressed in the medulla surrounding the lateral half of the facial nucleus. Also expressed in the olfactory bulb and hippocampus. Detected in a subset of neurons distributed throughout the retrotrapezoid nucleus/parafacial respiratory group (RTN/pFRG). Within the RTN/pFRG, expressed in neuronal subpopulations distinct from those expressing Grp. Expressed in lung.

It is found in the secreted. Its subcellular location is the cell projection. The protein localises to the neuron projection. In terms of biological role, stimulates smooth muscle contraction. Induces sighing by acting directly on the pre-Botzinger complex, a cluster of several thousand neurons in the ventrolateral medulla responsible for inspiration during respiratory activity. Contributes to the induction of sneezing following exposure to chemical irritants or allergens which causes release of NMB by nasal sensory neurons and activation of NMBR-expressing neurons in the sneeze-evoking region of the brainstem. These in turn activate neurons of the caudal ventral respiratory group, giving rise to the sneeze reflex. Contributes to induction of acute itch, possibly through activation of the NMBR receptor on dorsal root ganglion neurons. Increases expression of NMBR and steroidogenic mediators STAR, CYP11A1 and HSD3B1 in Leydig cells, induces secretion of testosterone by Leydig cells and also promotes Leydig cell proliferation. Plays a role in the innate immune response to influenza A virus infection by enhancing interferon alpha expression and reducing expression of IL6. Plays a role in CSF1-induced proliferation of osteoclast precursors by contributing to the positive regulation of the expression of the CSF1 receptor CSF1R. This is Neuromedin-B (Nmb) from Mus musculus (Mouse).